A 351-amino-acid chain; its full sequence is Divinyl chlorophyll a/b light-harvesting protein PcbC (351 aa).

The next 6 membrane-spanning stretches (helical) occupy residues 27-47, 81-101, 140-160, 202-222, 242-262, and 309-329; these read FIGS…GSTL, GVWT…FSAV, FILG…VEWA, VMSG…WHIA, AVLS…AFWC, and LSNV…WHAL.

It belongs to the PsbB/PsbC family. IsiA/Pcb subfamily. The antenna complex consists of divinyl chlorophylls (a and b) and divinyl chlorophyll a/b binding proteins and binds more divinyl chlorophyll b than does the antenna complex from high-light-adapted Prochlorococcus. Divinyl chlorophyll a serves as cofactor. Divinyl chlorophyll b is required as a cofactor.

Its subcellular location is the cellular thylakoid membrane. The antenna complex functions as a light receptor, it captures and delivers excitation energy to photosystems II and I. The Prochlorales pcb genes are not related to higher plant LHCs. In Prochlorococcus marinus (strain NATL2A), this protein is Divinyl chlorophyll a/b light-harvesting protein PcbC (pcbC).